The following is a 179-amino-acid chain: Large ribosomal subunit protein uL6 (179 aa).

It belongs to the universal ribosomal protein uL6 family. As to quaternary structure, part of the 50S ribosomal subunit.

Its function is as follows. This protein binds to the 23S rRNA, and is important in its secondary structure. It is located near the subunit interface in the base of the L7/L12 stalk, and near the tRNA binding site of the peptidyltransferase center. This Desulfovibrio desulfuricans (strain ATCC 27774 / DSM 6949 / MB) protein is Large ribosomal subunit protein uL6.